The sequence spans 293 residues: sn-glycerol-3-phosphate transport system permease protein UgpA (293 aa).

Helical transmembrane passes span 10 to 30 (ILPY…FFWP), 72 to 92 (VTVI…LLLA), 108 to 128 (MMIM…LFMF), 156 to 176 (MLLV…LFFV), 204 to 224 (IVFP…TVYA), and 261 to 281 (LGSS…LTAF). An ABC transmembrane type-1 domain is found at 66–282 (YLNSLKVTVI…VIVIALTAFQ (217 aa)).

Belongs to the binding-protein-dependent transport system permease family. As to quaternary structure, the complex is composed of two ATP-binding proteins (UgpC), two transmembrane proteins (UgpA and UgpE) and a solute-binding protein (UgpB).

It is found in the cell inner membrane. Functionally, part of the ABC transporter complex UgpBAEC involved in sn-glycerol-3-phosphate (G3P) import. Probably responsible for the translocation of the substrate across the membrane. The polypeptide is sn-glycerol-3-phosphate transport system permease protein UgpA (ugpA) (Agrobacterium fabrum (strain C58 / ATCC 33970) (Agrobacterium tumefaciens (strain C58))).